The chain runs to 88 residues: Apolipoprotein C-I (88 aa).

An N-terminal signal peptide occupies residues 1–26; it reads MRLFISLPVLIVVLAMALEGPAPAQA.

This sequence belongs to the apolipoprotein C1 family.

Its subcellular location is the secreted. Inhibitor of lipoprotein binding to the low density lipoprotein (LDL) receptor, LDL receptor-related protein, and very low density lipoprotein (VLDL) receptor. Associates with high density lipoproteins (HDL) and the triacylglycerol-rich lipoproteins in the plasma and makes up about 10% of the protein of the VLDL and 2% of that of HDL. Appears to interfere directly with fatty acid uptake and is also the major plasma inhibitor of cholesteryl ester transfer protein (CETP). Modulates the interaction of APOE with beta-migrating VLDL and inhibits binding of beta-VLDL to the LDL receptor-related protein. Binds free fatty acids and reduces their intracellular esterification. This chain is Apolipoprotein C-I (APOC1), found in Myodes glareolus (Bank vole).